The sequence spans 285 residues: Diaminopimelate epimerase 2 (285 aa).

Residues N11, N63, 73-74 (GN), N158, N191, 209-210 (ER), and 219-220 (GS) each bind substrate.

This sequence belongs to the diaminopimelate epimerase family. As to quaternary structure, homodimer.

The protein localises to the cytoplasm. It catalyses the reaction (2S,6S)-2,6-diaminopimelate = meso-2,6-diaminopimelate. It participates in amino-acid biosynthesis; L-lysine biosynthesis via DAP pathway; DL-2,6-diaminopimelate from LL-2,6-diaminopimelate: step 1/1. In terms of biological role, catalyzes the stereoinversion of LL-2,6-diaminopimelate (L,L-DAP) to meso-diaminopimelate (meso-DAP), a precursor of L-lysine and an essential component of the bacterial peptidoglycan. This is Diaminopimelate epimerase 2 from Nostoc sp. (strain PCC 7120 / SAG 25.82 / UTEX 2576).